The following is a 294-amino-acid chain: 4-hydroxybenzoate octaprenyltransferase (294 aa).

8 consecutive transmembrane segments (helical) span residues leucine 20–leucine 42, tryptophan 98–phenylalanine 118, asparagine 120–methionine 140, histidine 145–alanine 165, tryptophan 175–valine 195, alanine 218–alanine 238, serine 242–alanine 262, and phenylalanine 274–phenylalanine 294.

Belongs to the UbiA prenyltransferase family. Mg(2+) serves as cofactor.

Its subcellular location is the cell inner membrane. The enzyme catalyses all-trans-octaprenyl diphosphate + 4-hydroxybenzoate = 4-hydroxy-3-(all-trans-octaprenyl)benzoate + diphosphate. It functions in the pathway cofactor biosynthesis; ubiquinone biosynthesis. Its function is as follows. Catalyzes the prenylation of para-hydroxybenzoate (PHB) with an all-trans polyprenyl group. Mediates the second step in the final reaction sequence of ubiquinone-8 (UQ-8) biosynthesis, which is the condensation of the polyisoprenoid side chain with PHB, generating the first membrane-bound Q intermediate 3-octaprenyl-4-hydroxybenzoate. The chain is 4-hydroxybenzoate octaprenyltransferase from Marinobacter nauticus (strain ATCC 700491 / DSM 11845 / VT8) (Marinobacter aquaeolei).